The primary structure comprises 40 residues: Photosystem II reaction center protein X (40 aa).

The Lumenal segment spans residues 1–11; that stretch reads TITPSLKGFFI. A helical transmembrane segment spans residues 12–28; it reads GLLSGAVVLGLTFAVLI. Residues 29–40 are Cytoplasmic-facing; it reads AISQIDKVQRSL.

This sequence belongs to the PsbX family. Type 1 subfamily. In terms of assembly, PSII is composed of 1 copy each of membrane proteins PsbA, PsbB, PsbC, PsbD, PsbE, PsbF, PsbH, PsbI, PsbJ, PsbK, PsbL, PsbM, PsbT, PsbX, PsbY, PsbZ, Psb30/Ycf12, peripheral proteins PsbO, CyanoQ (PsbQ), PsbU, PsbV and a large number of cofactors. It forms dimeric complexes. It depends on PSII binds multiple chlorophylls, carotenoids and specific lipids. as a cofactor.

The protein resides in the cellular thylakoid membrane. Involved in the binding and/or turnover of quinones at the Q(B) site of photosystem II (PSII). PSII is a light-driven water plastoquinone oxidoreductase, using light energy to abstract electrons from H(2)O, generating a proton gradient subsequently used for ATP formation. The chain is Photosystem II reaction center protein X from Thermostichus vulcanus (Synechococcus vulcanus).